Here is a 232-residue protein sequence, read N- to C-terminus: Uracil-DNA glycosylase (232 aa).

The active-site Proton acceptor is the D70.

Belongs to the uracil-DNA glycosylase (UDG) superfamily. UNG family.

The protein localises to the cytoplasm. It catalyses the reaction Hydrolyzes single-stranded DNA or mismatched double-stranded DNA and polynucleotides, releasing free uracil.. In terms of biological role, excises uracil residues from the DNA which can arise as a result of misincorporation of dUMP residues by DNA polymerase or due to deamination of cytosine. This Campylobacter fetus subsp. fetus (strain 82-40) protein is Uracil-DNA glycosylase.